A 159-amino-acid polypeptide reads, in one-letter code: uncharacterized protein (159 aa).

Residues Leu7–Glu151 enclose the N-acetyltransferase domain.

This is an uncharacterized protein from Bacillus licheniformis (strain ATCC 14580 / DSM 13 / JCM 2505 / CCUG 7422 / NBRC 12200 / NCIMB 9375 / NCTC 10341 / NRRL NRS-1264 / Gibson 46).